A 161-amino-acid polypeptide reads, in one-letter code: 2-C-methyl-D-erythritol 2,4-cyclodiphosphate synthase (161 aa).

D14 and H16 together coordinate a divalent metal cation. 4-CDP-2-C-methyl-D-erythritol 2-phosphate contacts are provided by residues 14–16 (DVH) and 40–41 (HS). H48 contacts a divalent metal cation. 4-CDP-2-C-methyl-D-erythritol 2-phosphate is bound by residues 62 to 64 (DLG), F142, and R145.

This sequence belongs to the IspF family. In terms of assembly, homotrimer. It depends on a divalent metal cation as a cofactor.

It catalyses the reaction 4-CDP-2-C-methyl-D-erythritol 2-phosphate = 2-C-methyl-D-erythritol 2,4-cyclic diphosphate + CMP. The protein operates within isoprenoid biosynthesis; isopentenyl diphosphate biosynthesis via DXP pathway; isopentenyl diphosphate from 1-deoxy-D-xylulose 5-phosphate: step 4/6. Involved in the biosynthesis of isopentenyl diphosphate (IPP) and dimethylallyl diphosphate (DMAPP), two major building blocks of isoprenoid compounds. Catalyzes the conversion of 4-diphosphocytidyl-2-C-methyl-D-erythritol 2-phosphate (CDP-ME2P) to 2-C-methyl-D-erythritol 2,4-cyclodiphosphate (ME-CPP) with a corresponding release of cytidine 5-monophosphate (CMP). The protein is 2-C-methyl-D-erythritol 2,4-cyclodiphosphate synthase of Acidothermus cellulolyticus (strain ATCC 43068 / DSM 8971 / 11B).